The following is a 485-amino-acid chain: Carbohydrate sulfotransferase 7 (485 aa).

Over 1–12 the chain is Cytoplasmic; that stretch reads MKGRRRRRREYC. A helical; Signal-anchor for type II membrane protein transmembrane segment spans residues 13 to 33; sequence KFTLLLALYTLLLLLVPSVLD. Over 34-485 the chain is Lumenal; sequence SGSEQDKGGR…PLETNANWAT (452 aa). Residues 66 to 88 are disordered; the sequence is EQGAEVRFQAEGNPDRSPRPQGN. N-linked (GlcNAc...) asparagine glycosylation is present at asparagine 88. 109 to 115 serves as a coordination point for 3'-phosphoadenylyl sulfate; sequence WRTGSSF. Asparagine 185 carries an N-linked (GlcNAc...) asparagine glycan. 277-285 is a 3'-phosphoadenylyl sulfate binding site; the sequence is RDPRAVHNS. N-linked (GlcNAc...) asparagine glycosylation occurs at asparagine 406. At serine 461 the chain carries Phosphoserine. Residues 465–475 are compositionally biased toward basic and acidic residues; that stretch reads RDVKTVRKGET. The interval 465 to 485 is disordered; the sequence is RDVKTVRKGETPLETNANWAT.

This sequence belongs to the sulfotransferase 1 family. Gal/GlcNAc/GalNAc subfamily.

The protein resides in the golgi apparatus membrane. The catalysed reaction is chondroitin beta-D-glucuronate + n 3'-phosphoadenylyl sulfate = chondroitin 6'-sulfate + n adenosine 3',5'-bisphosphate + n H(+). Its function is as follows. Sulfotransferase that utilizes 3'-phospho-5'-adenylyl sulfate (PAPS) as sulfonate donor to catalyze the transfer of sulfate to position 6 of non-reducing N-acetylglucosamine (GlcNAc) residues. Preferentially acts on mannose-linked GlcNAc. Also able to catalyze the transfer of sulfate to position 6 of the N-acetylgalactosamine (GalNAc) residue of chondroitin. Also acts on core 2 mucin-type oligosaccharide and N-acetyllactosamine oligomer with a lower efficiency. Has weak or no activity toward keratan sulfate and oligosaccharides containing the Galbeta1-4GlcNAc. Catalyzes 6-O-sulfation of beta-benzyl GlcNAc but not alpha- or beta-benzyl GalNAc. In Rattus norvegicus (Rat), this protein is Carbohydrate sulfotransferase 7 (Chst7).